Reading from the N-terminus, the 221-residue chain is MDPNRYQGIGMTSRRTRERLVSRLAEEGIRDPRVLQAILEVPRHLFVDEALASRAYDNTPLPIGHGQTISQPWVVARMTELLIEQSIPERVLELGTGSGYQAAVLAYLGVEVYTIERIKALADQARQRMRDLRLHRVHVRYGDGSEGWAQHAPYQGIIVTAAPEEVPDPLWDQLDEGGRLVAPLGGAGRPQELVLIERVDGELRRRHVASVSFVPLLGGCR.

The active site involves Ser70.

This sequence belongs to the methyltransferase superfamily. L-isoaspartyl/D-aspartyl protein methyltransferase family.

Its subcellular location is the cytoplasm. It carries out the reaction [protein]-L-isoaspartate + S-adenosyl-L-methionine = [protein]-L-isoaspartate alpha-methyl ester + S-adenosyl-L-homocysteine. Catalyzes the methyl esterification of L-isoaspartyl residues in peptides and proteins that result from spontaneous decomposition of normal L-aspartyl and L-asparaginyl residues. It plays a role in the repair and/or degradation of damaged proteins. This chain is Protein-L-isoaspartate O-methyltransferase, found in Alkalilimnicola ehrlichii (strain ATCC BAA-1101 / DSM 17681 / MLHE-1).